The chain runs to 118 residues: uncharacterized protein (118 aa).

The span at 1-12 (MADDNVSFTDQG) shows a compositional bias: polar residues. Residues 1 to 63 (MADDNVSFTD…KKGKTKKVRK (63 aa)) are disordered. Over residues 39–63 (TKKKGKKNKKSKKKAKKGKTKKVRK) the composition is skewed to basic residues. The helical transmembrane segment at 81-101 (FCAGIIVAMIMLFVIIIYGII) threads the bilayer.

Its subcellular location is the membrane. This is an uncharacterized protein from Caenorhabditis elegans.